The following is an 81-amino-acid chain: MSHSVKIYDTCIGCTQCVRACPTDVLEMIPWGGCKAKQIASAPRTEDCVGCKRCESACPTDFLSVRVYLWHETTRSMGLAY.

4Fe-4S ferredoxin-type domains follow at residues 2–31 (SHSV…MIPW) and 39–68 (IASA…VRVY). Residues cysteine 11, cysteine 14, cysteine 17, cysteine 21, cysteine 48, cysteine 51, cysteine 54, and cysteine 58 each coordinate [4Fe-4S] cluster.

The eukaryotic PSI reaction center is composed of at least 11 subunits. It depends on [4Fe-4S] cluster as a cofactor.

The protein localises to the plastid. It localises to the chloroplast thylakoid membrane. It carries out the reaction reduced [plastocyanin] + hnu + oxidized [2Fe-2S]-[ferredoxin] = oxidized [plastocyanin] + reduced [2Fe-2S]-[ferredoxin]. Apoprotein for the two 4Fe-4S centers FA and FB of photosystem I (PSI); essential for photochemical activity. FB is the terminal electron acceptor of PSI, donating electrons to ferredoxin. The C-terminus interacts with PsaA/B/D and helps assemble the protein into the PSI complex. Required for binding of PsaD and PsaE to PSI. PSI is a plastocyanin-ferredoxin oxidoreductase, converting photonic excitation into a charge separation, which transfers an electron from the donor P700 chlorophyll pair to the spectroscopically characterized acceptors A0, A1, FX, FA and FB in turn. This chain is Photosystem I iron-sulfur center, found in Phaseolus vulgaris (Kidney bean).